The following is a 422-amino-acid chain: COUP transcription factor 1 (422 aa).

Residues 1-80 (MAMVVSSWRD…QGPPGSGQSQ (80 aa)) form a disordered region. Over residues 39–66 (EQQQAGSGAPHTPQTPGQPGAPATPGTQ) the composition is skewed to low complexity. Residues 82 to 157 (HIECVVCGDK…VGMRREAVQR (76 aa)) constitute a DNA-binding region (nuclear receptor). 2 NR C4-type zinc fingers span residues 85 to 105 (CVVC…CEGC) and 121 to 145 (CRAN…LKKC). The NR LBD domain maps to 183 to 409 (YLSGYISLLL…TLIRDMLLSG (227 aa)). The interval 343 to 422 (LQEKSQCALE…NWPYMSIQCS (80 aa)) is important for dimerization.

This sequence belongs to the nuclear hormone receptor family. NR2 subfamily. In terms of assembly, binds DNA as dimer; homodimer and probable heterodimer with NR2F6. Interacts with GTF2B; this interaction is direct. Interacts with COPS2.

Its subcellular location is the nucleus. Functionally, coup (chicken ovalbumin upstream promoter) transcription factor binds to the ovalbumin promoter and, in conjunction with another protein (S300-II) stimulates initiation of transcription. Binds to both direct repeats and palindromes of the 5'-AGGTCA-3' motif. Represses transcriptional activity of LHCG. The protein is COUP transcription factor 1 (Nr2f1) of Mus musculus (Mouse).